The chain runs to 145 residues: Large ribosomal subunit protein uL13 (145 aa).

This sequence belongs to the universal ribosomal protein uL13 family. As to quaternary structure, part of the 50S ribosomal subunit.

Its function is as follows. This protein is one of the early assembly proteins of the 50S ribosomal subunit, although it is not seen to bind rRNA by itself. It is important during the early stages of 50S assembly. This chain is Large ribosomal subunit protein uL13, found in Bacillus velezensis (strain DSM 23117 / BGSC 10A6 / LMG 26770 / FZB42) (Bacillus amyloliquefaciens subsp. plantarum).